Consider the following 92-residue polypeptide: Small ribosomal subunit protein uS19c (92 aa).

Belongs to the universal ribosomal protein uS19 family.

The protein localises to the plastid. Its subcellular location is the chloroplast. Functionally, protein S19 forms a complex with S13 that binds strongly to the 16S ribosomal RNA. This chain is Small ribosomal subunit protein uS19c, found in Oltmannsiellopsis viridis (Marine flagellate).